Here is a 124-residue protein sequence, read N- to C-terminus: Fluoride-specific ion channel FluC (124 aa).

The next 4 membrane-spanning stretches (helical) occupy residues 4-24 (FVLV…LSGV), 35-55 (YGTV…WGIL), 67-87 (LLLL…TYEG), and 100-120 (ALYI…GAGL). The Na(+) site is built by Gly-75 and Thr-78.

Belongs to the fluoride channel Fluc/FEX (TC 1.A.43) family.

Its subcellular location is the cell inner membrane. It catalyses the reaction fluoride(in) = fluoride(out). Na(+) is not transported, but it plays an essential structural role and its presence is essential for fluoride channel function. Its function is as follows. Fluoride-specific ion channel. Important for reducing fluoride concentration in the cell, thus reducing its toxicity. In Nitratidesulfovibrio vulgaris (strain ATCC 29579 / DSM 644 / CCUG 34227 / NCIMB 8303 / VKM B-1760 / Hildenborough) (Desulfovibrio vulgaris), this protein is Fluoride-specific ion channel FluC.